Consider the following 76-residue polypeptide: Large ribosomal subunit protein uL29 (76 aa).

The protein belongs to the universal ribosomal protein uL29 family.

In Corynebacterium kroppenstedtii (strain DSM 44385 / JCM 11950 / CIP 105744 / CCUG 35717), this protein is Large ribosomal subunit protein uL29.